Consider the following 705-residue polypeptide: Ribosomal RNA large subunit methyltransferase K/L (705 aa).

The region spanning 43–154 is the THUMP domain; it reads LLYQSLLWSR…RDTASVALDL (112 aa).

This sequence belongs to the methyltransferase superfamily. RlmKL family.

The protein resides in the cytoplasm. The enzyme catalyses guanosine(2445) in 23S rRNA + S-adenosyl-L-methionine = N(2)-methylguanosine(2445) in 23S rRNA + S-adenosyl-L-homocysteine + H(+). The catalysed reaction is guanosine(2069) in 23S rRNA + S-adenosyl-L-methionine = N(2)-methylguanosine(2069) in 23S rRNA + S-adenosyl-L-homocysteine + H(+). Functionally, specifically methylates the guanine in position 2445 (m2G2445) and the guanine in position 2069 (m7G2069) of 23S rRNA. In Pectobacterium atrosepticum (strain SCRI 1043 / ATCC BAA-672) (Erwinia carotovora subsp. atroseptica), this protein is Ribosomal RNA large subunit methyltransferase K/L.